Here is a 266-residue protein sequence, read N- to C-terminus: Elongation factor Ts (266 aa).

The segment at 80-83 (TDFV) is involved in Mg(2+) ion dislocation from EF-Tu.

The protein belongs to the EF-Ts family.

It is found in the cytoplasm. In terms of biological role, associates with the EF-Tu.GDP complex and induces the exchange of GDP to GTP. It remains bound to the aminoacyl-tRNA.EF-Tu.GTP complex up to the GTP hydrolysis stage on the ribosome. In Buchnera aphidicola subsp. Baizongia pistaciae (strain Bp), this protein is Elongation factor Ts.